The chain runs to 243 residues: Trypsin (243 aa).

An N-terminal signal peptide occupies residues 1 to 15 (MKFLLLCVLLGAAAA). Residues 16–20 (FDDDK) constitute a propeptide, activation peptide. A Peptidase S1 domain is found at 21-241 (IIGGATCAKS…YNAWIQNTIA (221 aa)). Cystine bridges form between Cys27-Cys157, Cys45-Cys61, Cys129-Cys230, Cys136-Cys203, Cys168-Cys182, and Cys193-Cys217. His60 serves as the catalytic Charge relay system. Ca(2+) contacts are provided by Glu72, Asn74, and Glu82. The active-site Charge relay system is the Asp104. Residue Ser197 is the Charge relay system of the active site.

This sequence belongs to the peptidase S1 family. Requires Ca(2+) as cofactor.

The protein localises to the secreted. It localises to the extracellular space. The enzyme catalyses Preferential cleavage: Arg-|-Xaa, Lys-|-Xaa.. This is Trypsin from Xenopus laevis (African clawed frog).